Reading from the N-terminus, the 314-residue chain is Short-chain dehydrogenase/reductase sthC (314 aa).

Residues 1-10 are compositionally biased toward polar residues; the sequence is MAPAETTGNV. The tract at residues 1–27 is disordered; the sequence is MAPAETTGNVQRPEAGKQSMGSFWTQM. Residues Val-56, Lys-80, Asp-105, Asn-132, and Arg-167 each contribute to the NADP(+) site. The active-site Proton donor is the Ser-191. NADP(+) contacts are provided by Tyr-222 and Lys-226. Tyr-222 serves as the catalytic Proton acceptor. The active-site Lowers pKa of active site Tyr is Lys-226.

Belongs to the short-chain dehydrogenases/reductases (SDR) family.

It carries out the reaction dehydroprobetaenone I + AH2 = probetaenone I + A. It catalyses the reaction betaenone C + AH2 = betaenone B + A. The protein operates within mycotoxin biosynthesis. In terms of biological role, short-chain dehydrogenase/reductase; part of the gene cluster that mediates the biosynthesis of the phytotoxin stemphyloxin II. The first step of the pathway is the synthesis of dehydroprobetaenone I by the polyketide synthase sthA and the enoyl reductase sthE via condensation of one acetyl-CoA starter unit with 7 malonyl-CoA units and 5 methylations. The C-terminal reductase (R) domain of sthA catalyzes the reductive release of the polyketide chain. Because sthA lacks a designated enoylreductase (ER) domain, the required activity is provided the enoyl reductase sthE. The short-chain dehydrogenase/reductase sthC then catalyzes reduction of dehydroprobetaenone I to probetaenone I. The cytochrome P450 monooxygenase sthF catalyzes successive epoxidation, oxidation (resulting from epoxide opening) and hydroxylation to install a tertiary alcohol in the decaline ring to yield betaenone C from dehydroprobetaenone I and betaenone B from probetaenone I. The FAD-linked oxidoreductase sthB is responsible for the conversion of betaenone C to betaenone A via an intramolecular aldol reaction between C-1 and C-17 to form the bridged tricyclic system in betaenone A. Finally, the cytochrome P450 monooxygenase sthD catalyzes the hydroxylation of C-15 to afford the final metabolite stemphyloxin II. This Phaeosphaeria nodorum (strain SN15 / ATCC MYA-4574 / FGSC 10173) (Glume blotch fungus) protein is Short-chain dehydrogenase/reductase sthC.